The primary structure comprises 184 residues: Ras-related protein Rap-1b-like protein (184 aa).

Residue 10–18 coordinates GTP; sequence GSRGVGKSA. An Effector region motif is present at residues 32 to 40; it reads YDPTIEDSY. GTP is bound by residues 57–61, 116–119, and 147–149; these read DTAGT, NKCD, and SAK. The S-geranylgeranyl cysteine moiety is linked to residue Cys-181. The propeptide at 182–184 is removed in mature form; that stretch reads QLL.

Belongs to the small GTPase superfamily. Ras family.

It localises to the cell membrane. Its subcellular location is the cytoplasm. The protein localises to the cytosol. The catalysed reaction is GTP + H2O = GDP + phosphate + H(+). Its function is as follows. Probable GTP-binding protein with intrinsic GTPase activity. In Homo sapiens (Human), this protein is Ras-related protein Rap-1b-like protein.